We begin with the raw amino-acid sequence, 756 residues long: Virulence factor MDV010 (756 aa).

The N-terminal stretch at 1–30 is a signal peptide; it reads MPSKSIADHHAGYGVALAIVALLLIHGTAL. A disordered region spans residues 96 to 120; it reads EEHITLSSPRTSTKTTNENGHEKDS. The segment covering 100 to 113 has biased composition (polar residues); that stretch reads TLSSPRTSTKTTNE. N-linked (GlcNAc...) asparagine; by host glycosylation is found at Asn222, Asn241, Asn287, Asn423, Asn495, Asn542, Asn552, Asn580, Asn660, Asn684, Asn715, and Asn744.

The protein localises to the secreted. In terms of biological role, may play a role in host immune modulation since the protein is secreted and provides an advantage for growth in vivo while it is completely dispensable in cell culture. The protein is Virulence factor MDV010 (MDV010) of Gallid herpesvirus 2 (strain Chicken/Md5/ATCC VR-987) (GaHV-2).